The sequence spans 883 residues: Alanine--tRNA ligase (883 aa).

Zn(2+) contacts are provided by His-563, His-567, Cys-677, and His-681.

The protein belongs to the class-II aminoacyl-tRNA synthetase family. Zn(2+) is required as a cofactor.

The protein localises to the cytoplasm. The enzyme catalyses tRNA(Ala) + L-alanine + ATP = L-alanyl-tRNA(Ala) + AMP + diphosphate. Its function is as follows. Catalyzes the attachment of alanine to tRNA(Ala) in a two-step reaction: alanine is first activated by ATP to form Ala-AMP and then transferred to the acceptor end of tRNA(Ala). Also edits incorrectly charged Ser-tRNA(Ala) and Gly-tRNA(Ala) via its editing domain. This chain is Alanine--tRNA ligase, found in Cereibacter sphaeroides (strain ATCC 17023 / DSM 158 / JCM 6121 / CCUG 31486 / LMG 2827 / NBRC 12203 / NCIMB 8253 / ATH 2.4.1.) (Rhodobacter sphaeroides).